The primary structure comprises 1188 residues: DNA-directed RNA polymerase subunit beta (1188 aa).

The protein belongs to the RNA polymerase beta chain family. In terms of assembly, the RNAP catalytic core consists of 2 alpha, 1 beta, 1 beta' and 1 omega subunit. When a sigma factor is associated with the core the holoenzyme is formed, which can initiate transcription.

The enzyme catalyses RNA(n) + a ribonucleoside 5'-triphosphate = RNA(n+1) + diphosphate. In terms of biological role, DNA-dependent RNA polymerase catalyzes the transcription of DNA into RNA using the four ribonucleoside triphosphates as substrates. The sequence is that of DNA-directed RNA polymerase subunit beta from Streptococcus sanguinis (strain SK36).